Consider the following 196-residue polypeptide: Molybdenum cofactor guanylyltransferase (196 aa).

GTP is bound by residues 10 to 12, Lys-23, Asn-51, Asp-69, and Asp-99; that span reads LAG. A Mg(2+)-binding site is contributed by Asp-99.

Belongs to the MobA family. In terms of assembly, monomer. Requires Mg(2+) as cofactor.

It is found in the cytoplasm. It carries out the reaction Mo-molybdopterin + GTP + H(+) = Mo-molybdopterin guanine dinucleotide + diphosphate. Its function is as follows. Transfers a GMP moiety from GTP to Mo-molybdopterin (Mo-MPT) cofactor (Moco or molybdenum cofactor) to form Mo-molybdopterin guanine dinucleotide (Mo-MGD) cofactor. The sequence is that of Molybdenum cofactor guanylyltransferase from Shewanella baltica (strain OS155 / ATCC BAA-1091).